The following is a 459-amino-acid chain: MKSRPLHIAMYPWLAMGHQTAFLHLCNKLAIRGHKISFITPPKAQAKLEPFNLHPNSITFVTINVPHVEGLPPDAQTTADVTYPLQPQIMTAMDLTKDDIETLLTGLKPDLVFYDFTHWMPALAKRLGIKAVHYCTASSVMVGYTLTPSRFHQGTDLMESDLMEPPEGYPDSSIKLQTHEARTFAAKRKDTFGSNVLFYDRQFIALNEADLLAYRTCREIEGPYMDYIGKQFNKPVVATGPVILDPPTLDLEEKFSTWLGGFEPGSVVYCCFGSECTLRPNQFLELVLGLELTGMPFLAAVKAPLGFETVESAMPEGFQERVKGRGFVYGGWVQQQLILAHPSVGCFITHCGSGSLSEALVNKCQLVLLPNVGDQILNARMMGTNLEVGVEVEKGDEDGMYTKESVCKAVSIVMDCENETSKRVRANHARIRELLLNKDLESSYVDSFCMRLQEIVEGI.

Residue His18 is the Proton acceptor of the active site. His18 is a binding site for an anthocyanidin. Asp115 serves as the catalytic Charge relay. UDP-alpha-D-glucose is bound by residues Thr136, Val333, Gln335, His350, Ser355, and Glu358. Residue Gly373 participates in an anthocyanidin binding. Residues Asp374 and Gln375 each coordinate UDP-alpha-D-glucose.

The protein belongs to the UDP-glycosyltransferase family. In terms of tissue distribution, expressed in leaves.

The enzyme catalyses a flavonol 3-O-beta-D-glucoside + UDP-alpha-D-glucose = a flavonol 3-O-beta-D-glucosyl-(1-&gt;2)-beta-D-glucoside + UDP + H(+). Functionally, flavonol 3-O-glucoside/galactoside (1-&gt;2) glucosyltransferase converting kaempferol 3-O-glucoside to kaempferol 3-O-sophoroside. Has a broad in vitro activity for kaempferol/ quercetin 3-O-glucoside/galactoside derivatives, but cannot glucosylate kaempferol 3-O-rhamnosyl-(1-&gt;4)-[rhamnosyl-(1-&gt;6)- glucoside] and 3-O-rhamnosyl-(1-&gt;4)-[glucosyl-(1-&gt;6)-glucoside]. Has a higher preference for UDP-glucose than UDP-galactose, and no activity with UDP-arabinose and UDP-glucuronic acid. Represents probably a recessive allele of the gene. This Glycine max (Soybean) protein is UDP-glycosyltransferase 79B30.